The chain runs to 431 residues: POU domain, class 2, transcription factor 3 (431 aa).

3 disordered regions span residues 1-39 (MVNL…RNGL), 130-180 (LLPQ…EPTD), and 248-267 (DAES…YPTL). A POU-specific domain is found at 176 to 250 (DEPTDLEELE…LLEKWLNDAE (75 aa)). Low complexity predominate over residues 251-267 (SSPSDPSASTPSSYPTL). The segment at residues 274-333 (KRKKRTSIETNIRLTLEKRFQDNPKPSSEEISMIAEQLSMEKEVVRVWFCNRRQKEKRIN) is a DNA-binding region (homeobox). Composition is skewed to low complexity over residues 352–364 (PSGS…VPPV), 374–390 (SSCS…PGSG), and 398–419 (ASQN…NSSG). The disordered stretch occupies residues 352–419 (PSGSLGPLSV…SSSSSFNSSG (68 aa)).

This sequence belongs to the POU transcription factor family. Class-2 subfamily. In terms of assembly, interacts (via the POU domain) with POU2AF1 and POU2AF2 in a DNA-dependent manner; this interaction recruits POU2AF2 to chromatin and increases POU2F3 transactivation activity. As to expression, skin, thymus, stomach and testis.

The protein localises to the nucleus. Functionally, transcription factor that binds to the octamer motif (5'-ATTTGCAT-3'). Regulates cell type-specific differentiation pathways. Involved in the regulation of keratinocytes differentiation. The POU2F3-POU2AF2/POU2AF3 complex drives the expression of tuft-cell-specific genes, a rare chemosensory cells that coordinate immune and neural functions within mucosal epithelial tissues. The chain is POU domain, class 2, transcription factor 3 (Pou2f3) from Mus musculus (Mouse).